The primary structure comprises 595 residues: Probable hydrolase M10 (595 aa).

The N-terminal stretch at 1 to 23 is a signal peptide; it reads MRFTSTILLRVAVLLSLGGGSQT. Residues asparagine 59, asparagine 87, asparagine 266, asparagine 436, asparagine 457, and asparagine 561 are each glycosylated (N-linked (GlcNAc...) asparagine).

The protein belongs to the beta-lactamase family.

It functions in the pathway secondary metabolite biosynthesis. Its function is as follows. Probable hydrolase; part of the gene cluster that mediates the biosynthesis of squalestatin S1 (SQS1, also known as zaragozic acid A), a heavily oxidized fungal polyketide that offers potent cholesterol lowering activity by targeting squalene synthase (SS). SQS1 is composed of a 2,8-dioxobicyclic[3.2.1]octane-3,4,5-tricarboxyclic acid core that is connected to two lipophilic polyketide arms. These initial steps feature the priming of an unusual benzoic acid starter unit onto the highly reducing polyketide synthase pks2, followed by oxaloacetate extension and product release to generate a tricarboxylic acid containing product. The phenylalanine ammonia lyase (PAL) M7 and the acyl-CoA ligase M9 are involved in transforming phenylalanine into benzoyl-CoA. The citrate synthase-like protein R3 is involved in connecting the C-alpha-carbons of the hexaketide chain and oxaloacetate to afford the tricarboxylic acid unit. The potential hydrolytic enzymes, M8 and M10, are in close proximity to pks2 and may participate in product release. On the other side, the tetraketide arm is synthesized by a the squalestatin tetraketide synthase pks1 and enzymatically esterified to the core in the last biosynthetic step, by the acetyltransferase M4. The biosynthesis of the tetraketide must involve 3 rounds of chain extension. After the first and second rounds methyl-transfer occurs, and in all rounds of extension the ketoreductase and dehydratase are active. The enoyl reductase and C-MeT of pks1 are not active in the final round of extension. The acetyltransferase M4 appears to have a broad substrate selectivity for its acyl CoA substrate, allowing the in vitro synthesis of novel squalestatins. The biosynthesis of SQS1 requires several oxidative steps likely performed by oxidoreductases M1, R1 and R2. Finally, in support of the identification of the cluster as being responsible for SQS1 production, the cluster contains a gene encoding a putative squalene synthase (SS) R6, suggesting a likely mechanism for self-resistance. The sequence is that of Probable hydrolase M10 from Phoma sp. (strain ATCC 20986 / MF5453).